Consider the following 149-residue polypeptide: MERTFIMIKPDGVQRGLVGEVIGRFEAKGFTLVGLKLMSVSKELAEEHYDVHKERPFFGSLVEFICSSPVVAMVWEGDGVVASARKLIGATNPLSAEPGTIRGDFGVSVGRNLIHGSDAIETAQREISLWFNEKELSSWEPTAKTWLYE.

The ATP site is built by lysine 9, phenylalanine 57, arginine 85, threonine 91, arginine 102, and asparagine 112. The Pros-phosphohistidine intermediate role is filled by histidine 115.

Belongs to the NDK family. In terms of assembly, homotetramer. Requires Mg(2+) as cofactor.

It is found in the cytoplasm. It carries out the reaction a 2'-deoxyribonucleoside 5'-diphosphate + ATP = a 2'-deoxyribonucleoside 5'-triphosphate + ADP. The catalysed reaction is a ribonucleoside 5'-diphosphate + ATP = a ribonucleoside 5'-triphosphate + ADP. Major role in the synthesis of nucleoside triphosphates other than ATP. The ATP gamma phosphate is transferred to the NDP beta phosphate via a ping-pong mechanism, using a phosphorylated active-site intermediate. The protein is Nucleoside diphosphate kinase of Crocosphaera subtropica (strain ATCC 51142 / BH68) (Cyanothece sp. (strain ATCC 51142)).